The following is a 316-amino-acid chain: Phosphate acyltransferase (316 aa).

This sequence belongs to the PlsX family. Homodimer. Probably interacts with PlsY.

It localises to the cytoplasm. The catalysed reaction is a fatty acyl-[ACP] + phosphate = an acyl phosphate + holo-[ACP]. It participates in lipid metabolism; phospholipid metabolism. Functionally, catalyzes the reversible formation of acyl-phosphate (acyl-PO(4)) from acyl-[acyl-carrier-protein] (acyl-ACP). This enzyme utilizes acyl-ACP as fatty acyl donor, but not acyl-CoA. The chain is Phosphate acyltransferase from Chlamydia felis (strain Fe/C-56) (Chlamydophila felis).